The sequence spans 65 residues: Large ribosomal subunit protein uL29 (65 aa).

Belongs to the universal ribosomal protein uL29 family.

This is Large ribosomal subunit protein uL29 (rpmC) from Xylella fastidiosa (strain 9a5c).